The sequence spans 96 residues: Translation initiation factor 1A 1 (96 aa).

An S1-like domain is found at 8 to 82 (GSHDLRMPDD…EKGDITWRYE (75 aa)).

It belongs to the eIF-1A family.

Seems to be required for maximal rate of protein biosynthesis. Enhances ribosome dissociation into subunits and stabilizes the binding of the initiator Met-tRNA(I) to 40 S ribosomal subunits. The chain is Translation initiation factor 1A 1 from Haloquadratum walsbyi (strain DSM 16790 / HBSQ001).